Here is a 927-residue protein sequence, read N- to C-terminus: Sodium/calcium exchanger 3 (927 aa).

The first 30 residues, 1–30 (MAWLRLQPLTSAFLHFGLVTFVLFLNGLRA), serve as a signal peptide directing secretion. Residues 31-73 (EAGDLRDVPSAGQNNESCSGSSDCKEGVILPIWYPENPSLGDK) lie on the Extracellular side of the membrane. N-linked (GlcNAc...) asparagine glycosylation occurs at N45. The chain crosses the membrane as a helical span at residues 74–94 (IARVIVYFVALIYMFLGVSII). Over 95–147 (ADRFMASIEVITSQEREVTIKKPNGETSTTTIRVWNETVSNLTLMALGSSAPE) the chain is Cytoplasmic. Residues 140-180 (ALGSSAPEILLSLIEVCGHGFIAGDLGPSTIVGSAAFNMFI) form an Alpha-1 repeat. The chain crosses the membrane as a helical span at residues 148-168 (ILLSLIEVCGHGFIAGDLGPS). Residue T169 is a topological domain, extracellular. The helical transmembrane segment at 170–190 (IVGSAAFNMFIIIGICVYVIP) threads the bilayer. At 191-202 (DGETRKIKHLRV) the chain is on the cytoplasmic side. The helical transmembrane segment at 203–223 (FFVTAAWSVFAYIWLYMILAV) threads the bilayer. The Extracellular segment spans residues 224–230 (FSPGVVQ). Residues 231-251 (VWEGLLTLFFFPVCVLLAWVA) traverse the membrane as a helical segment. The Cytoplasmic segment spans residues 252–726 (DKRLLFYKYM…DESGEERLPS (475 aa)). A putative calmodulin-binding region region spans residues 253–272 (KRLLFYKYMHKRYRTDKHRG). Calx-beta domains lie at 386-485 (VHTD…VRLS) and 519-619 (ATVT…IALG). 15 residues coordinate Ca(2+): E409, D445, D470, D471, I473, E475, E478, D525, D526, D527, E543, D579, E606, E607, and E672. Residues 727 to 747 (CFDYVMHFLTVFWKVLFACVP) traverse the membrane as a helical segment. Residues 748-754 (PTEYCHG) are Extracellular-facing. A helical transmembrane segment spans residues 755 to 775 (WACFVVSILIIGMLTAIIGDL). At 776 to 778 (ASH) the chain is on the cytoplasmic side. The helical transmembrane segment at 779–799 (FGCTIGLKDSVTAVVFVAFGT) threads the bilayer. The stretch at 796-832 (AFGTSVPDTFASKAAALQDVYADASIGNVTGSNAVNV) is one Alpha-2 repeat. The Extracellular segment spans residues 800–828 (SVPDTFASKAAALQDVYADASIGNVTGSN). Residue N823 is glycosylated (N-linked (GlcNAc...) asparagine). Residues 829 to 849 (AVNVFLGIGLAWSVAAIYWAM) form a helical membrane-spanning segment. Topologically, residues 850 to 860 (QGQEFHVSAGT) are cytoplasmic. Residues 861–881 (LAFSVTLFTIFAFVCLSVLLY) form a helical membrane-spanning segment. The Extracellular portion of the chain corresponds to 882–903 (RRRPHLGGELGGPRGCKLATTW). Residues 904–924 (LFVSLWLLYVLFATLEAYCYI) traverse the membrane as a helical segment. Topologically, residues 925 to 927 (KGF) are cytoplasmic.

Belongs to the Ca(2+):cation antiporter (CaCA) (TC 2.A.19) family. SLC8 subfamily. In terms of assembly, interacts with AKAP1. In terms of tissue distribution, detected in neurons in brain cortex and hippocampus. Detected in pyramidal cell bodies and processes, in granule cells and interneurons in the CA1 and CA3 region of the hippocampus. Detected on astrocyte processes in brain cortex. Detected on endothelial cells in hippocampus capillaries (at protein level). Restricted to brain and skeletal muscle.

It localises to the cell membrane. It is found in the perikaryon. The protein resides in the cell projection. The protein localises to the dendrite. Its subcellular location is the dendritic spine. It localises to the sarcolemma. It is found in the cytoplasm. The protein resides in the sarcoplasm. The protein localises to the cell junction. Its subcellular location is the mitochondrion outer membrane. It localises to the endoplasmic reticulum membrane. It is found in the perinuclear region. The catalysed reaction is Ca(2+)(in) + 3 Na(+)(out) = Ca(2+)(out) + 3 Na(+)(in). With respect to regulation, calcium transport is down-regulated by Na(+) and stimulated by Ca(2+). Functionally, mediates the electrogenic exchange of Ca(2+) against Na(+) ions across the cell membrane, and thereby contributes to the regulation of cytoplasmic Ca(2+) levels and Ca(2+)-dependent cellular processes. Contributes to cellular Ca(2+) homeostasis in excitable cells, both in muscle and in brain. In a first phase, voltage-gated channels mediate the rapid increase of cytoplasmic Ca(2+) levels due to release of Ca(2+) stores from the endoplasmic reticulum. SLC8A3 mediates the export of Ca(2+) from the cell during the next phase, so that cytoplasmic Ca(2+) levels rapidly return to baseline. Contributes to Ca(2+) transport during excitation-contraction coupling in muscle. In neurons, contributes to the rapid decrease of cytoplasmic Ca(2+) levels back to baseline after neuronal activation, and thereby contributes to modulate synaptic plasticity, learning and memory. Required for normal oligodendrocyte differentiation and for normal myelination. Mediates Ca(2+) efflux from mitochondria and contributes to mitochondrial Ca(2+) ion homeostasis. The protein is Sodium/calcium exchanger 3 (Slc8a3) of Rattus norvegicus (Rat).